A 435-amino-acid polypeptide reads, in one-letter code: Nucleoredoxin (435 aa).

Residue S2 is modified to N-acetylserine. A Thioredoxin domain is found at 167–321 (PKPFREVIAG…VLELSDSNAA (155 aa)).

Belongs to the nucleoredoxin family. Associates with the phosphatase 2A holoenzyme. Interacts with PPP2CA; the interaction is direct. Interacts with DVL1 (via PDZ domain); the interaction is direct and regulated by oxidative stress.

It is found in the cytoplasm. The protein resides in the cytosol. It localises to the nucleus. It carries out the reaction [protein]-dithiol + NAD(+) = [protein]-disulfide + NADH + H(+). The enzyme catalyses [protein]-dithiol + NADP(+) = [protein]-disulfide + NADPH + H(+). Functions as a redox-dependent negative regulator of the Wnt signaling pathway, possibly by preventing ubiquitination of DVL3 by the BCR(KLHL12) complex. May also function as a transcriptional regulator act as a regulator of protein phosphatase 2A (PP2A). The chain is Nucleoredoxin (NXN) from Homo sapiens (Human).